The primary structure comprises 407 residues: MDLDPAHKPSQAEETKEQGNEQGQVEQNQAQQDPTTGPQAETEKAIIPSQGSTIPQKRSAEDEPAQPMSKNALKRLRKQQQWEAGKEDRKLKRKDSRIARKVRKREERDALIAQGINPYANKQKPPSVNVPISLIFDCEFEQYMREKEIISLGSQITRSYSENKNAKYRTNIYVSNWNGKLAERFHQILDDKHQNWKGIDFVEGDFIECAEKAREKMKHENMIEPLQRSLTEKSPWARDEKDPLPLPDPEPEPRPEYSDIVYLSSDSPYTLERLEPNTSYVIGGLVDKNREKGLCYKRARERGIRTARLPIGQYMVMQSRTVLTTNHVVEIMLKWLEYENWGEAFMSVIPKRKGGKLKEQQGASGETQETEEAEAEDPEEENEETKDPDAEASASKQNTPKVEVTSK.

Residues 1 to 19 are compositionally biased toward basic and acidic residues; the sequence is MDLDPAHKPSQAEETKEQG. Disordered regions lie at residues 1–105 and 220–256; these read MDLD…VRKR and ENMI…PRPE. Residues 20–32 show a composition bias toward low complexity; it reads NEQGQVEQNQAQQ. Residues 91-103 are compositionally biased toward basic residues; sequence LKRKDSRIARKVR. Residues 120–356 enclose the SAM-dependent MTase TRM10-type domain; sequence ANKQKPPSVN…SVIPKRKGGK (237 aa). Residues 263 to 264, glycine 283, 287 to 291, cysteine 295, leucine 309, and 321 to 323 contribute to the S-adenosyl-L-methionine site; these read LS, DKNRE, and TVL. The active-site Proton acceptor is the aspartate 287. Residues 353 to 407 are disordered; sequence KGGKLKEQQGASGETQETEEAEAEDPEEENEETKDPDAEASASKQNTPKVEVTSK. The span at 368–386 shows a compositional bias: acidic residues; the sequence is QETEEAEAEDPEEENEETK. A compositionally biased stretch (polar residues) spans 394–407; it reads ASKQNTPKVEVTSK.

The protein belongs to the class IV-like SAM-binding methyltransferase superfamily. TRM10 family. Monomer.

Its subcellular location is the cytoplasm. The protein localises to the nucleus. It carries out the reaction guanosine(9) in tRNA + S-adenosyl-L-methionine = N(1)-methylguanosine(9) in tRNA + S-adenosyl-L-homocysteine + H(+). Functionally, S-adenosyl-L-methionine-dependent guanine N(1)-methyltransferase that catalyzes the formation of N(1)-methylguanine at position 9 (m1G9) in cytoplasmic tRNA. The chain is tRNA (guanine(9)-N1)-methyltransferase from Gibberella zeae (strain ATCC MYA-4620 / CBS 123657 / FGSC 9075 / NRRL 31084 / PH-1) (Wheat head blight fungus).